Reading from the N-terminus, the 337-residue chain is Quinolinate synthase (337 aa).

Residues H38 and S59 each coordinate iminosuccinate. C104 contacts [4Fe-4S] cluster. Iminosuccinate-binding positions include 130 to 132 (YAN) and S147. C191 serves as a coordination point for [4Fe-4S] cluster. Residues 217–219 (HPE) and T234 each bind iminosuccinate. C288 lines the [4Fe-4S] cluster pocket.

Belongs to the quinolinate synthase family. Type 1 subfamily. The cofactor is [4Fe-4S] cluster.

The protein resides in the cytoplasm. The catalysed reaction is iminosuccinate + dihydroxyacetone phosphate = quinolinate + phosphate + 2 H2O + H(+). The protein operates within cofactor biosynthesis; NAD(+) biosynthesis; quinolinate from iminoaspartate: step 1/1. In terms of biological role, catalyzes the condensation of iminoaspartate with dihydroxyacetone phosphate to form quinolinate. The chain is Quinolinate synthase from Wigglesworthia glossinidia brevipalpis.